A 495-amino-acid polypeptide reads, in one-letter code: Potassium voltage-gated channel subfamily A member 1 (495 aa).

The interval 1–30 (MTVMSGENVDEASAAPGHPQDGSYPRQADH) is disordered. The tract at residues 1-128 (MTVMSGENVD…FYELGEEAME (128 aa)) is tetramerization domain. Topologically, residues 1–164 (MTVMSGENVD…LLFEYPESSG (164 aa)) are cytoplasmic. Ser-23 is subject to Phosphoserine. Residues 165–186 (PARVIAIVSVMVILISIVIFCL) traverse the membrane as a helical segment. Over 187–220 (ETLPELKDDKDFTGTVHRIDNTTVIYNSNIFTDP) the chain is Extracellular. An N-linked (GlcNAc...) asparagine glycan is attached at Asn-207. The helical transmembrane segment at 221–242 (FFIVETLCIIWFSFELVVRFFA) threads the bilayer. Residue Cys-243 is the site of S-palmitoyl cysteine attachment. At 243-253 (CPSKTDFFKNI) the chain is on the cytoplasmic side. A helical transmembrane segment spans residues 254 to 274 (MNFIDIVAIIPYFITLGTEIA). The Extracellular segment spans residues 275–287 (EQEGNQKGEQATS). A helical; Voltage-sensor transmembrane segment spans residues 288-308 (LAILRVIRLVRVFRIFKLSRH). Over 309–323 (SKGLQILGQTLKASM) the chain is Cytoplasmic. The interval 310 to 323 (KGLQILGQTLKASM) is S4-S5 linker. Position 322 is a phosphoserine; by PKA (Ser-322). A helical transmembrane segment spans residues 324-345 (RELGLLIFFLFIGVILFSSAVY). At 346–359 (FAEAEEAESHFSSI) the chain is on the extracellular side. An intramembrane region (helical) is located at residues 360–371 (PDAFWWAVVSMT). The Selectivity filter motif lies at 372-377 (TVGYGD). An intramembrane segment occupies 372 to 379 (TVGYGDMY). Topologically, residues 380-386 (PVTIGGK) are extracellular. The helical transmembrane segment at 387–415 (IVGSLCAIAGVLTIALPVPVIVSNFNYFY) threads the bilayer. Topologically, residues 416–495 (HRETEGEEQA…VNKSKLLTDV (80 aa)) are cytoplasmic. Ser-437 and Ser-439 each carry phosphoserine. Position 446 is a phosphoserine; by PKA (Ser-446). Positions 493-495 (TDV) match the PDZ-binding motif.

This sequence belongs to the potassium channel family. A (Shaker) (TC 1.A.1.2) subfamily. Kv1.1/KCNA1 sub-subfamily. As to quaternary structure, homotetramer and heterotetramer with other channel-forming alpha subunits, such as KCNA2, KCNA4, KCNA5, KCNA6 and KCNA7. Channel activity is regulated by interaction with the beta subunits KCNAB1 and KCNAB2. Identified in a complex with KCNA2 and KCNAB2. Interacts (via C-terminus) with the PDZ domains of DLG1, DLG2 and DLG4. Interacts with LGI1 within a complex containing LGI1, KCNA4 and KCNAB1. Interacts (via N-terminus) with STX1A; this promotes channel inactivation. Interacts (via N-terminus) with the heterodimer formed by GNB1 and GNG2; this promotes channel inactivation. Can interact simultaneously with STX1A and the heterodimer formed by GNB1 and GNG2. Interacts (via cytoplasmic N-terminal domain) with KCNRG; this inhibits channel activity. Interacts with ANK3; this inhibits channel activity. Interacts with ADAM11. Post-translationally, N-glycosylated. In terms of processing, palmitoylated on Cys-243; which may be required for membrane targeting. Phosphorylated on tyrosine residues. Phosphorylation increases in response to NRG1; this inhibits channel activity. Phosphorylation at Ser-446 regulates channel activity by down-regulating expression at the cell membrane. Detected adjacent to nodes of Ranvier in juxtaparanodal zones in spinal cord nerve fibers, but also in paranodal regions in some myelinated spinal cord axons (at protein level). Detected in the islet of Langerhans.

The protein resides in the cell membrane. Its subcellular location is the membrane. It localises to the cell projection. The protein localises to the axon. It is found in the cytoplasmic vesicle. The protein resides in the perikaryon. Its subcellular location is the endoplasmic reticulum. It localises to the dendrite. The protein localises to the cell junction. It is found in the synapse. The protein resides in the presynaptic cell membrane. Its subcellular location is the presynapse. The catalysed reaction is K(+)(in) = K(+)(out). Its activity is regulated as follows. Inhibited by 1.1 mM 4-aminopyridine (4-AP) and by 20 mM tetraethylammonium (TEA), but not by charybdotoxin (CTX). Inhibited by dendrotoxin (DTX). Functionally, voltage-gated potassium channel that mediates transmembrane potassium transport in excitable membranes, primarily in the brain and the central nervous system, but also in the kidney. Contributes to the regulation of the membrane potential and nerve signaling, and prevents neuronal hyperexcitability. Forms tetrameric potassium-selective channels through which potassium ions pass in accordance with their electrochemical gradient. The channel alternates between opened and closed conformations in response to the voltage difference across the membrane. Can form functional homotetrameric channels and heterotetrameric channels that contain variable proportions of KCNA1, KCNA2, KCNA4, KCNA5, KCNA6, KCNA7, and possibly other family members as well; channel properties depend on the type of alpha subunits that are part of the channel. Channel properties are modulated by cytoplasmic beta subunits that regulate the subcellular location of the alpha subunits and promote rapid inactivation of delayed rectifier potassium channels. In vivo, membranes probably contain a mixture of heteromeric potassium channel complexes, making it difficult to assign currents observed in intact tissues to any particular potassium channel family member. Homotetrameric KCNA1 forms a delayed-rectifier potassium channel that opens in response to membrane depolarization, followed by slow spontaneous channel closure. In contrast, a heterotetrameric channel formed by KCNA1 and KCNA4 shows rapid inactivation. Regulates neuronal excitability in hippocampus, especially in mossy fibers and medial perforant path axons, preventing neuronal hyperexcitability. Response to toxins that are selective for KCNA1, respectively for KCNA2, suggests that heteromeric potassium channels composed of both KCNA1 and KCNA2 play a role in pacemaking and regulate the output of deep cerebellar nuclear neurons. May function as down-stream effector for G protein-coupled receptors and inhibit GABAergic inputs to basolateral amygdala neurons. May contribute to the regulation of neurotransmitter release, such as gamma-aminobutyric acid (GABA) release. Plays a role in regulating the generation of action potentials and preventing hyperexcitability in myelinated axons of the vagus nerve, and thereby contributes to the regulation of heart contraction. Required for normal neuromuscular responses. Regulates the frequency of neuronal action potential firing in response to mechanical stimuli, and plays a role in the perception of pain caused by mechanical stimuli, but does not play a role in the perception of pain due to heat stimuli. Required for normal responses to auditory stimuli and precise location of sound sources, but not for sound perception. The use of toxins that block specific channels suggest that it contributes to the regulation of the axonal release of the neurotransmitter dopamine. Required for normal postnatal brain development and normal proliferation of neuronal precursor cells in the brain. Plays a role in the reabsorption of Mg(2+) in the distal convoluted tubules in the kidney and in magnesium ion homeostasis, probably via its effect on the membrane potential. This chain is Potassium voltage-gated channel subfamily A member 1, found in Homo sapiens (Human).